Here is a 230-residue protein sequence, read N- to C-terminus: Ribonuclease HII (230 aa).

The RNase H type-2 domain occupies 21–212 (GPVAGVDEVG…VRRVANGSGG (192 aa)). D27, E28, and D121 together coordinate a divalent metal cation.

This sequence belongs to the RNase HII family. Mn(2+) is required as a cofactor. The cofactor is Mg(2+).

The protein resides in the cytoplasm. It catalyses the reaction Endonucleolytic cleavage to 5'-phosphomonoester.. Functionally, endonuclease that specifically degrades the RNA of RNA-DNA hybrids. In Mycobacterium avium (strain 104), this protein is Ribonuclease HII.